An 818-amino-acid chain; its full sequence is Beta-glucosidase (818 aa).

Aspartate 222 is a catalytic residue. The PA14 domain maps to 386 to 538 (VFSGEMTVEY…GDAGIAEAVE (153 aa)).

Belongs to the glycosyl hydrolase 3 family.

The protein resides in the cytoplasm. It carries out the reaction Hydrolysis of terminal, non-reducing beta-D-glucosyl residues with release of beta-D-glucose.. Functionally, involved in modifying a vir-inducing plant signal molecule. Hydrolyzes coniferin but not cellobiose. This Rhizobium radiobacter (Agrobacterium tumefaciens) protein is Beta-glucosidase (cbg-1).